The following is a 428-amino-acid chain: MFVDQVKIYVKGGDGGNGMVAYRREKYVPKGGPAGGDGGKGADVVFIVEEGLRTLMDFRYQRHFKADRGQHGMSKGQHGRKSEDLLVKVPPGTVVKDEKTGQILADLVTHGQTAVIAKGGRGGRGNSRFATATNPAPEIAENGEPGQERDVILELKVLADVGLVGFPSVGKSTLLSVVSSARPKIAEYHFTTIVPNLGVVETGDNRSFVMADLPGLIEGAHAGVGLGHQFLRHIERTRVIVHVIDMSGLEGRDPYEDYVTINNELKEYNLRLTERPQVVVANKMDMPDAEENLQAFKEKVGDEVKIFPISAVTKQGVRDLLFEVANLIETTPEFPIHEVIDESDTSVMYKFETEGVKFDITRESDGTFVISGYDIEKTFKMTDFSRDESVRRFARQMRGMGIDEALRARGAKDGDIVKILEYEFEFID.

The 158-residue stretch at methionine 1–leucine 158 folds into the Obg domain. The 171-residue stretch at alanine 159–glutamate 329 folds into the OBG-type G domain. GTP contacts are provided by residues glycine 165 to serine 172, phenylalanine 190 to valine 194, aspartate 212 to glycine 215, asparagine 282 to aspartate 285, and serine 310 to valine 312. Residues serine 172 and threonine 192 each coordinate Mg(2+). Residues lysine 350–aspartate 428 enclose the OCT domain.

The protein belongs to the TRAFAC class OBG-HflX-like GTPase superfamily. OBG GTPase family. Monomer. Requires Mg(2+) as cofactor.

The protein localises to the cytoplasm. Its function is as follows. An essential GTPase which binds GTP, GDP and possibly (p)ppGpp with moderate affinity, with high nucleotide exchange rates and a fairly low GTP hydrolysis rate. Plays a role in control of the cell cycle, stress response, ribosome biogenesis and in those bacteria that undergo differentiation, in morphogenesis control. This is GTPase Obg from Bacillus cereus (strain AH820).